The primary structure comprises 526 residues: NAD(P)H-quinone oxidoreductase chain 4 2 (526 aa).

14 helical membrane passes run 6-26 (FPWL…LPLI), 36-56 (WYAL…FYTG), 91-111 (LILL…PVSF), 113-133 (PKLF…VFAV), 137-157 (LLFF…LSIW), 169-189 (FILY…TMAF), 212-232 (LLLY…FPLH), 243-263 (TAPA…YALL), 275-295 (ALFG…AALT), 306-326 (IAYS…SFTD), 332-352 (AMLQ…MVGA), 375-397 (IFAM…GFVA), 417-437 (VIIV…LLSM), and 464-484 (VFVI…PKAV).

This sequence belongs to the complex I subunit 4 family.

Its subcellular location is the cellular thylakoid membrane. It carries out the reaction a plastoquinone + NADH + (n+1) H(+)(in) = a plastoquinol + NAD(+) + n H(+)(out). The catalysed reaction is a plastoquinone + NADPH + (n+1) H(+)(in) = a plastoquinol + NADP(+) + n H(+)(out). NDH-1 shuttles electrons from NAD(P)H, via FMN and iron-sulfur (Fe-S) centers, to quinones in the respiratory chain. The immediate electron acceptor for the enzyme in this species is believed to be plastoquinone. Couples the redox reaction to proton translocation (for every two electrons transferred, four hydrogen ions are translocated across the cytoplasmic membrane), and thus conserves the redox energy in a proton gradient. The sequence is that of NAD(P)H-quinone oxidoreductase chain 4 2 from Picosynechococcus sp. (strain ATCC 27264 / PCC 7002 / PR-6) (Agmenellum quadruplicatum).